We begin with the raw amino-acid sequence, 150 residues long: Monothiol glutaredoxin-S13 (150 aa).

A disordered region spans residues 30-52; the sequence is PSSSSSSLSWLTSGSPKPTSISN. Residues 31–44 show a composition bias toward low complexity; it reads SSSSSSLSWLTSGS. The Glutaredoxin domain maps to 53–149; that stretch reads KRSSNLVVME…PTLRQAGALW (97 aa). Cys73 provides a ligand contact to [2Fe-2S] cluster. Positions 147-150 match the Responsive for interaction with TGA factors motif; that stretch reads ALWL.

It belongs to the glutaredoxin family. CC-type subfamily.

Its subcellular location is the cytoplasm. It is found in the nucleus. Its function is as follows. May only reduce GSH-thiol disulfides, but not protein disulfides. This Arabidopsis thaliana (Mouse-ear cress) protein is Monothiol glutaredoxin-S13 (GRXS13).